We begin with the raw amino-acid sequence, 130 residues long: Anti-adapter protein IraD (130 aa).

This sequence belongs to the GpW/Gp25 family. IraD subfamily. In terms of assembly, interacts with RssB.

It localises to the cytoplasm. Its function is as follows. Inhibits RpoS proteolysis by regulating RssB activity, thereby increasing the stability of the sigma stress factor RpoS during oxidative stress. Its effect on RpoS stability is due to its interaction with RssB, which probably blocks the interaction of RssB with RpoS, and the consequent delivery of the RssB-RpoS complex to the ClpXP protein degradation pathway. This chain is Anti-adapter protein IraD, found in Escherichia coli O45:K1 (strain S88 / ExPEC).